The following is a 1116-amino-acid chain: Disease resistance protein RGA5 (1116 aa).

Residues 1-177 (MDAPASFSLG…HHGVSANLVG (177 aa)) form a structured coiled coil (CC) domain region. The region spanning 182 to 466 (KTKLNRWLSD…WSAEGFVSAN (285 aa)) is the NB-ARC domain. LRR repeat units follow at residues 608–631 (LFQLRYLKTSGDVVVQLPAQISGL), 633–653 (YLETLEIDARVSAVPFDLVHL), 654–675 (PNLLHLQLQDETKLPDGIGCMR), 677–701 (LRTLQYFDLGNNSVDNLRGLGELTN), 732–755 (LSNLKSLILSPGAISMVIFFDISS), 786–808 (LHKLCILKVSVRELLTTDIDNLT), 810–830 (LPSLTVLSLYAQTAPEGRFIF), 835–857 (LPVLKYFKFGCGELCLAFMAGAM), and 858–882 (PNLQRLKLVFNIRKSEKYRHTLFGI). A disordered region spans residues 935–971 (EEESHPLEKQHHKREKGSSAGHGVLEKESVEDSEKNT). Positions 958-971 (VLEKESVEDSEKNT) are enriched in basic and acidic residues. Positions 997–1066 (RTKIVVKVHM…KCGLAELLMV (70 aa)) constitute an HMA domain. Residues 1000–1070 (IVVKVHMPCG…AELLMVELVE (71 aa)) are HMA-like domain.

The protein belongs to the disease resistance NB-LRR family. In terms of assembly, forms homodimer or heterodimer with RGA4 through its coiled coil (CC) domain. Interacts with AVR1-Pia and AVR-CO39 through its C-terminal part containing the HMA-like domain. In terms of tissue distribution, expressed in leaves.

It is found in the cytoplasm. Functionally, disease resistance (R) protein that recognizes the AVR-Pia and AVR1-CO39 effector avirulence proteins from M.oryzae. Resistance proteins guard the plant against pathogens that contain an appropriate avirulence protein via an indirect interaction with this avirulence protein. That triggers a defense system including the hypersensitive response, which restricts the pathogen growth. Contribution of RGA4 is required to recognize the effector avirulence proteins AVR-Pia and AVR1-CO39 from M.oryzae. Acts as a repressor of the RGA4-mediated cell death activation. Upon infection, recognition and binding of the AVR effectors relieve the RGA5-mediated repression and triggers the hypersensitive response. Immune response triggered by the RGA4-RGA5 -mediated recognition of AVR1-CO39 confers resistance to X.oryzae pathovars. This Oryza sativa subsp. japonica (Rice) protein is Disease resistance protein RGA5.